The sequence spans 202 residues: Regulator of G-protein signaling 16 (202 aa).

2 S-palmitoyl cysteine lipidation sites follow: C2 and C12. One can recognise an RGS domain in the interval 65–181 (SFDLLLSSKN…LKSPAYRDLA (117 aa)). Y168 carries the post-translational modification Phosphotyrosine; by EGFR. Y177 carries the post-translational modification Phosphotyrosine.

In terms of assembly, interacts with GNAI1 and GNAQ. Interacts with GNAI2, GNAI3 and GNAO1. Post-translationally, palmitoylated on Cys-2 and/or Cys-12. Phosphorylated. Phosphorylation at Tyr-168 by EGFR enhances GTPase accelerating (GAP) activity toward GNAI1. Abundantly expressed in retina with lower levels of expression in most other tissues.

Its subcellular location is the membrane. Its function is as follows. Regulates G protein-coupled receptor signaling cascades. Inhibits signal transduction by increasing the GTPase activity of G protein alpha subunits, thereby driving them into their inactive GDP-bound form. Plays an important role in the phototransduction cascade by regulating the lifetime and effective concentration of activated transducin alpha. May regulate extra and intracellular mitogenic signals. The protein is Regulator of G-protein signaling 16 (RGS16) of Homo sapiens (Human).